The chain runs to 118 residues: Nucleoid-associated protein TM_0687 (118 aa).

It belongs to the YbaB/EbfC family. As to quaternary structure, homodimer.

It is found in the cytoplasm. Its subcellular location is the nucleoid. Functionally, binds to DNA and alters its conformation. May be involved in regulation of gene expression, nucleoid organization and DNA protection. This chain is Nucleoid-associated protein TM_0687, found in Thermotoga maritima (strain ATCC 43589 / DSM 3109 / JCM 10099 / NBRC 100826 / MSB8).